Reading from the N-terminus, the 298-residue chain is Uricase (298 aa).

Catalysis depends on charge relay system residues K18 and T63. The urate site is built by T63, D64, F165, R182, V229, Q230, and N256. The active-site Charge relay system is H258. Residues 296-298 (ARM) carry the Microbody targeting signal motif.

It belongs to the uricase family. In terms of assembly, homotetramer; dimer of dimers.

Its subcellular location is the peroxisome. The enzyme catalyses urate + O2 + H2O = 5-hydroxyisourate + H2O2. Its pathway is purine metabolism; urate degradation; (S)-allantoin from urate: step 1/3. Its activity is regulated as follows. Competitively inhibited by xanthine. Functionally, catalyzes the oxidation of uric acid to 5-hydroxyisourate, which is further processed to form (S)-allantoin. The protein is Uricase of Danio rerio (Zebrafish).